Here is a 128-residue protein sequence, read N- to C-terminus: Small ribosomal subunit protein uS9 (128 aa).

The disordered stretch occupies residues 107-128 (RAVERKKPGRPKARKRFQFSKR). Over residues 113–128 (KPGRPKARKRFQFSKR) the composition is skewed to basic residues.

It belongs to the universal ribosomal protein uS9 family.

This Parabacteroides distasonis (strain ATCC 8503 / DSM 20701 / CIP 104284 / JCM 5825 / NCTC 11152) protein is Small ribosomal subunit protein uS9.